The primary structure comprises 174 residues: Crossover junction endodeoxyribonuclease RuvC (174 aa).

Residues Asp-8, Glu-67, and Asp-139 contribute to the active site. Mg(2+)-binding residues include Asp-8, Glu-67, and Asp-139.

This sequence belongs to the RuvC family. Homodimer which binds Holliday junction (HJ) DNA. The HJ becomes 2-fold symmetrical on binding to RuvC with unstacked arms; it has a different conformation from HJ DNA in complex with RuvA. In the full resolvosome a probable DNA-RuvA(4)-RuvB(12)-RuvC(2) complex forms which resolves the HJ. Requires Mg(2+) as cofactor.

The protein localises to the cytoplasm. The catalysed reaction is Endonucleolytic cleavage at a junction such as a reciprocal single-stranded crossover between two homologous DNA duplexes (Holliday junction).. The RuvA-RuvB-RuvC complex processes Holliday junction (HJ) DNA during genetic recombination and DNA repair. Endonuclease that resolves HJ intermediates. Cleaves cruciform DNA by making single-stranded nicks across the HJ at symmetrical positions within the homologous arms, yielding a 5'-phosphate and a 3'-hydroxyl group; requires a central core of homology in the junction. The consensus cleavage sequence is 5'-(A/T)TT(C/G)-3'. Cleavage occurs on the 3'-side of the TT dinucleotide at the point of strand exchange. HJ branch migration catalyzed by RuvA-RuvB allows RuvC to scan DNA until it finds its consensus sequence, where it cleaves and resolves the cruciform DNA. The polypeptide is Crossover junction endodeoxyribonuclease RuvC (Pseudomonas putida (strain GB-1)).